A 206-amino-acid polypeptide reads, in one-letter code: 2,3-bisphosphoglycerate-dependent phosphoglycerate mutase (206 aa).

Residues 9–16 (RHGQSEWN), 22–23 (TG), Arg61, 88–91 (ERDY), Lys99, 115–116 (RR), and 159–160 (GN) contribute to the substrate site. The active-site Tele-phosphohistidine intermediate is the His10. Residue Glu88 is the Proton donor/acceptor of the active site.

The protein belongs to the phosphoglycerate mutase family. BPG-dependent PGAM subfamily. Homodimer.

The enzyme catalyses (2R)-2-phosphoglycerate = (2R)-3-phosphoglycerate. It functions in the pathway carbohydrate degradation; glycolysis; pyruvate from D-glyceraldehyde 3-phosphate: step 3/5. In terms of biological role, catalyzes the interconversion of 2-phosphoglycerate and 3-phosphoglycerate. The protein is 2,3-bisphosphoglycerate-dependent phosphoglycerate mutase of Chelativorans sp. (strain BNC1).